A 441-amino-acid chain; its full sequence is POC1 centriolar protein homolog A (441 aa).

7 WD repeats span residues 16–55 (GHRD…RAYR), 58–97 (GHKD…ESTV), 100–139 (AHTG…FLFS), 142–181 (QHIN…CIHS), 184–223 (EHGG…LIQH), 226–265 (VHSG…LLYT), and 268–307 (GHQG…ASYA). Residues 323-380 (DYTSGVPAADRHRPERNAQTDQADDLEPRHIQMSAKDRSSPLSYTSRSIDQHHPQAED) form a disordered region. Composition is skewed to basic and acidic residues over residues 331–340 (ADRHRPERNA), 348–361 (LEPR…KDRS), and 371–380 (IDQHHPQAED). Residues 400–427 (LTRTVGILEQRLSLTEDKLKECIDNQQA) are a coiled coil.

The protein belongs to the WD repeat POC1 family. In terms of assembly, interacts with pat.

The protein localises to the cytoplasm. Its subcellular location is the cytoskeleton. In terms of biological role, may play an important role in centriole assembly and/or stability and ciliogenesis. This Xenopus tropicalis (Western clawed frog) protein is POC1 centriolar protein homolog A (poc1a).